A 136-amino-acid polypeptide reads, in one-letter code: Protein PsiE homolog (136 aa).

The next 4 helical transmembrane spans lie at 15–35, 55–75, 82–102, and 108–128; these read ILQT…VVFL, YELV…ALIV, FHFP…RLII, and PLDV…LWLC.

The protein belongs to the PsiE family.

It localises to the cell inner membrane. The sequence is that of Protein PsiE homolog from Enterobacter sp. (strain 638).